The primary structure comprises 668 residues: UvrABC system protein B (668 aa).

The 387-residue stretch at 27-413 (AGVQAGHRFQ…STQVVEQIIR (387 aa)) folds into the Helicase ATP-binding domain. Residue 40-47 (GATGTGKT) participates in ATP binding. The Beta-hairpin signature appears at 93 to 116 (YYDYYQPEAYIPVTDTYIEKSASI). A Helicase C-terminal domain is found at 430–596 (QVDDLYGEIR…PIVKKTSNAI (167 aa)). Residues 628-663 (PPLIQDLEAKMKAAAQELAFEEAARYRDQIKRLRDR) enclose the UVR domain.

The protein belongs to the UvrB family. Forms a heterotetramer with UvrA during the search for lesions. Interacts with UvrC in an incision complex.

It localises to the cytoplasm. Functionally, the UvrABC repair system catalyzes the recognition and processing of DNA lesions. A damage recognition complex composed of 2 UvrA and 2 UvrB subunits scans DNA for abnormalities. Upon binding of the UvrA(2)B(2) complex to a putative damaged site, the DNA wraps around one UvrB monomer. DNA wrap is dependent on ATP binding by UvrB and probably causes local melting of the DNA helix, facilitating insertion of UvrB beta-hairpin between the DNA strands. Then UvrB probes one DNA strand for the presence of a lesion. If a lesion is found the UvrA subunits dissociate and the UvrB-DNA preincision complex is formed. This complex is subsequently bound by UvrC and the second UvrB is released. If no lesion is found, the DNA wraps around the other UvrB subunit that will check the other stand for damage. This Thermosynechococcus vestitus (strain NIES-2133 / IAM M-273 / BP-1) protein is UvrABC system protein B.